The primary structure comprises 53 residues: Sodium/potassium-transporting ATPase subunit gamma (53 aa).

A helical transmembrane segment spans residues Gly-16 to Ser-34.

The protein belongs to the FXYD family. Regulatory subunit of the sodium/potassium-transporting ATPase which is composed of a catalytic alpha subunit, an auxiliary non-catalytic beta subunit and an additional regulatory subunit. In terms of processing, the N-terminus is blocked. As to expression, highest levels expressed in the kidney and spleen. Restricted to the basolateral membrane in renal epithelial cells and varies in its level of expression along the nephron.

The protein resides in the membrane. May be involved in forming the receptor site for cardiac glycoside binding or may modulate the transport function of the sodium ATPase. This is Sodium/potassium-transporting ATPase subunit gamma (FXYD2) from Ovis aries (Sheep).